The chain runs to 287 residues: Large ribosomal subunit protein uL2 (287 aa).

A disordered region spans residues Arg-221 to Ser-287. Residues Lys-258–Ser-287 show a composition bias toward basic residues.

It belongs to the universal ribosomal protein uL2 family. In terms of assembly, part of the 50S ribosomal subunit. Forms a bridge to the 30S subunit in the 70S ribosome.

One of the primary rRNA binding proteins. Required for association of the 30S and 50S subunits to form the 70S ribosome, for tRNA binding and peptide bond formation. It has been suggested to have peptidyltransferase activity; this is somewhat controversial. Makes several contacts with the 16S rRNA in the 70S ribosome. The sequence is that of Large ribosomal subunit protein uL2 from Prochlorococcus marinus (strain MIT 9211).